The sequence spans 304 residues: Glycine--tRNA ligase alpha subunit (304 aa).

Belongs to the class-II aminoacyl-tRNA synthetase family. In terms of assembly, tetramer of two alpha and two beta subunits.

The protein localises to the cytoplasm. The catalysed reaction is tRNA(Gly) + glycine + ATP = glycyl-tRNA(Gly) + AMP + diphosphate. The chain is Glycine--tRNA ligase alpha subunit from Yersinia enterocolitica serotype O:8 / biotype 1B (strain NCTC 13174 / 8081).